The sequence spans 440 residues: Serine hydroxymethyltransferase (440 aa).

(6S)-5,6,7,8-tetrahydrofolate is bound by residues leucine 119 and 123–125 (GHL). Lysine 228 carries the post-translational modification N6-(pyridoxal phosphate)lysine. 370–372 (SPF) provides a ligand contact to (6S)-5,6,7,8-tetrahydrofolate.

Belongs to the SHMT family. In terms of assembly, homodimer. It depends on pyridoxal 5'-phosphate as a cofactor.

It is found in the cytoplasm. It catalyses the reaction (6R)-5,10-methylene-5,6,7,8-tetrahydrofolate + glycine + H2O = (6S)-5,6,7,8-tetrahydrofolate + L-serine. The protein operates within one-carbon metabolism; tetrahydrofolate interconversion. It functions in the pathway amino-acid biosynthesis; glycine biosynthesis; glycine from L-serine: step 1/1. In terms of biological role, catalyzes the reversible interconversion of serine and glycine with tetrahydrofolate (THF) serving as the one-carbon carrier. This reaction serves as the major source of one-carbon groups required for the biosynthesis of purines, thymidylate, methionine, and other important biomolecules. Also exhibits THF-independent aldolase activity toward beta-hydroxyamino acids, producing glycine and aldehydes, via a retro-aldol mechanism. This is Serine hydroxymethyltransferase from Chloroherpeton thalassium (strain ATCC 35110 / GB-78).